The chain runs to 450 residues: Phosphoglucosamine mutase (450 aa).

Serine 101 serves as the catalytic Phosphoserine intermediate. The Mg(2+) site is built by serine 101, aspartate 242, aspartate 244, and aspartate 246. A Phosphoserine modification is found at serine 101.

This sequence belongs to the phosphohexose mutase family. Mg(2+) serves as cofactor. Activated by phosphorylation.

The catalysed reaction is alpha-D-glucosamine 1-phosphate = D-glucosamine 6-phosphate. In terms of biological role, catalyzes the conversion of glucosamine-6-phosphate to glucosamine-1-phosphate. This is Phosphoglucosamine mutase from Rhodopseudomonas palustris (strain TIE-1).